A 447-amino-acid polypeptide reads, in one-letter code: Argininosuccinate synthase (447 aa).

ATP contacts are provided by residues Ala-17 to Ser-25 and Ala-43. Tyr-99 lines the L-citrulline pocket. ATP contacts are provided by Gly-129 and Thr-131. Residues Thr-131, Asn-135, and Asp-136 each coordinate L-aspartate. Asn-135 is an L-citrulline binding site. An ATP-binding site is contributed by Asp-136. Arg-139 and Ser-192 together coordinate L-citrulline. Asp-194 contributes to the ATP binding site. Positions 201, 203, and 280 each coordinate L-citrulline.

It belongs to the argininosuccinate synthase family. Type 2 subfamily. As to quaternary structure, homotetramer.

It localises to the cytoplasm. It catalyses the reaction L-citrulline + L-aspartate + ATP = 2-(N(omega)-L-arginino)succinate + AMP + diphosphate + H(+). The protein operates within amino-acid biosynthesis; L-arginine biosynthesis; L-arginine from L-ornithine and carbamoyl phosphate: step 2/3. This is Argininosuccinate synthase from Salmonella newport (strain SL254).